Here is a 326-residue protein sequence, read N- to C-terminus: MLKIEKQAKAIKITEVKESNYKGQFIVEPLYRGYGNTLGNALRRVLLSSIPGAAIKGMRIEGVLSEFTVMDGVKEAVTEIILNVKEIVVKAESSGERRMSLSIKGPKVVKAADIVADIGLEIVNPEQVICTVTTDRTLDIEFIVDTGEGFVVSEEIDKKDWPVDYIAVDAIYTPIRKVSYEIQDTMFGRMTDFDKLTLNVETDGSIEIRDALSYAVELLKLHLDPFLEIGNKMENLRDDIEEMIEEPMDIQVIDDKSHDMKIEELDLTVRSFNCLKKAGIEEVSQLASLSLNELLKIKNLGKKSLDEILEKMKDLGYDLEKNGSPE.

An alpha N-terminal domain (alpha-NTD) region spans residues 1–230 (MLKIEKQAKA…LHLDPFLEIG (230 aa)). Positions 249 to 326 (DIQVIDDKSH…YDLEKNGSPE (78 aa)) are alpha C-terminal domain (alpha-CTD).

It belongs to the RNA polymerase alpha chain family. In terms of assembly, homodimer. The RNAP catalytic core consists of 2 alpha, 1 beta, 1 beta' and 1 omega subunit. When a sigma factor is associated with the core the holoenzyme is formed, which can initiate transcription.

It catalyses the reaction RNA(n) + a ribonucleoside 5'-triphosphate = RNA(n+1) + diphosphate. Functionally, DNA-dependent RNA polymerase catalyzes the transcription of DNA into RNA using the four ribonucleoside triphosphates as substrates. This is DNA-directed RNA polymerase subunit alpha from Fusobacterium nucleatum subsp. nucleatum (strain ATCC 25586 / DSM 15643 / BCRC 10681 / CIP 101130 / JCM 8532 / KCTC 2640 / LMG 13131 / VPI 4355).